The primary structure comprises 561 residues: uncharacterized protein (561 aa).

The segment covering 1–11 (MSQVSLPSQLK) has biased composition (polar residues). Disordered regions lie at residues 1 to 22 (MSQVSLPSQLKETGPRLQSRCR) and 522 to 561 (CSLPQSSPDPVPDGSPRPKQQPQQAQAEQAQQPQQQIMLP). Positions 541–561 (QQPQQAQAEQAQQPQQQIMLP) are enriched in low complexity.

The protein to Synechocystis PCC 6803 sll0335 and to M.tuberculosis Rv2567.

This is an uncharacterized protein from Mycobacterium leprae (strain TN).